Consider the following 492-residue polypeptide: Cytochrome P450 2A1 (492 aa).

Ser130 carries the phosphoserine modification. Cys437 lines the heme pocket.

This sequence belongs to the cytochrome P450 family. Heme serves as cofactor. As to expression, liver and testis.

It is found in the endoplasmic reticulum membrane. It localises to the microsome membrane. The catalysed reaction is an organic molecule + reduced [NADPH--hemoprotein reductase] + O2 = an alcohol + oxidized [NADPH--hemoprotein reductase] + H2O + H(+). Highly active in the 7-alpha-hydroxylation of testosterone, progesterone and androstenedione. In Rattus norvegicus (Rat), this protein is Cytochrome P450 2A1 (Cyp2a1).